The following is a 154-amino-acid chain: Telokin (154 aa).

A disordered region spans residues 1-24 (ISGMSGRKASGSSPTSPINANKVE). The span at 10–19 (SGSSPTSPIN) shows a compositional bias: polar residues. One can recognise an Ig-like C2-type domain in the interval 42-133 (PYFTKTILDM…ATCTAELLVE (92 aa)). The segment at 134–154 (TMGKEGEGEGEGEEDEEEEEE) is disordered. The segment covering 141–154 (GEGEGEEDEEEEEE) has biased composition (acidic residues).

It belongs to the protein kinase superfamily. CAMK Ser/Thr protein kinase family. In terms of assembly, binds calmodulin.

Functionally, corresponds to the C-terminus of smooth muscle myosin light chain kinase. In Meleagris gallopavo (Wild turkey), this protein is Telokin.